A 361-amino-acid polypeptide reads, in one-letter code: Protein Wnt-2 (361 aa).

The first 27 residues, 1 to 27, serve as a signal peptide directing secretion; it reads MNASVLGLCLSGPLVLLLAWLAPPVTS. Intrachain disulfides connect C77/C88, C128/C136, C138/C158, C207/C221, C209/C216, C279/C310, C295/C305, C309/C349, C325/C340, C327/C337, and C332/C333. S213 is lipidated: O-palmitoleoyl serine; by PORCN. N-linked (GlcNAc...) asparagine glycosylation occurs at N296.

Belongs to the Wnt family. In terms of processing, palmitoleoylation is required for efficient binding to frizzled receptors. Depalmitoleoylation leads to Wnt signaling pathway inhibition.

The protein resides in the secreted. Its subcellular location is the extracellular space. It localises to the extracellular matrix. Its function is as follows. Ligand for members of the frizzled family of seven transmembrane receptors. Probable developmental protein. May be a signaling molecule which affects the development of discrete regions of tissues. Is likely to signal over only few cell diameters. The protein is Protein Wnt-2 (WNT2) of Ornithorhynchus anatinus (Duckbill platypus).